The primary structure comprises 301 residues: N-acetylmuramic acid 6-phosphate etherase (301 aa).

The region spanning 57–220 is the SIS domain; sequence IAEAFRQGGR…TTGAMIRTGK (164 aa). Residue glutamate 85 is the Proton donor of the active site. Glutamate 116 is an active-site residue.

Belongs to the GCKR-like family. MurNAc-6-P etherase subfamily. As to quaternary structure, homodimer.

The enzyme catalyses N-acetyl-D-muramate 6-phosphate + H2O = N-acetyl-D-glucosamine 6-phosphate + (R)-lactate. It participates in amino-sugar metabolism; 1,6-anhydro-N-acetylmuramate degradation. It functions in the pathway amino-sugar metabolism; N-acetylmuramate degradation. The protein operates within cell wall biogenesis; peptidoglycan recycling. Specifically catalyzes the cleavage of the D-lactyl ether substituent of MurNAc 6-phosphate, producing GlcNAc 6-phosphate and D-lactate. Together with AnmK, is also required for the utilization of anhydro-N-acetylmuramic acid (anhMurNAc) either imported from the medium or derived from its own cell wall murein, and thus plays a role in cell wall recycling. The polypeptide is N-acetylmuramic acid 6-phosphate etherase (Photorhabdus laumondii subsp. laumondii (strain DSM 15139 / CIP 105565 / TT01) (Photorhabdus luminescens subsp. laumondii)).